Reading from the N-terminus, the 329-residue chain is Phenylalanine--tRNA ligase alpha subunit (329 aa).

Mg(2+) is bound at residue Glu-254.

The protein belongs to the class-II aminoacyl-tRNA synthetase family. Phe-tRNA synthetase alpha subunit type 1 subfamily. In terms of assembly, tetramer of two alpha and two beta subunits. Mg(2+) serves as cofactor.

The protein localises to the cytoplasm. The catalysed reaction is tRNA(Phe) + L-phenylalanine + ATP = L-phenylalanyl-tRNA(Phe) + AMP + diphosphate + H(+). In Haemophilus influenzae (strain PittEE), this protein is Phenylalanine--tRNA ligase alpha subunit.